A 1647-amino-acid chain; its full sequence is Cortactin-binding protein 2 (1647 aa).

5 disordered regions span residues 1-27 (MATDGASCEPDASRAPEEAAGATAEAA), 202-222 (EKKKTNELEEELSAEKRRSTE), 318-427 (HVKK…QPGL), 440-468 (GNANDPDQNGNTTQSPPSRDVSPTSRDNL), and 482-604 (LSRF…PSID). Residues 120–276 (KMQERMATQL…EQLKRGSDSK (157 aa)) adopt a coiled-coil conformation. Over residues 362–372 (SSAPSLPPASA) the composition is skewed to low complexity. The span at 379 to 388 (GPSTGSTADL) shows a compositional bias: polar residues. Residues 389–411 (PSSTAPAPGSAAQSPVAAALGPA) show a composition bias toward low complexity. The span at 440–466 (GNANDPDQNGNTTQSPPSRDVSPTSRD) shows a compositional bias: polar residues. Arg484 is subject to Asymmetric dimethylarginine. The segment covering 488–509 (PAVGAAPRPGAPPTGDAGAYPP) has biased composition (low complexity). A compositionally biased stretch (polar residues) spans 569–579 (TVASPPSSLPQ). ANK repeat units follow at residues 695–725 (GRPTLLQQAAAQGNVTLLSMLLNEEGLDINY), 729–758 (DGHSALYSAAKNGHTDCVRLLLNAEAQVNA), 762–791 (NGFTPLCAAAAQGHFECVELLIAYDANINH), 795–824 (GGQTPLYLACKNGNKECIKLLLEAGTDRSV), and 828–857 (DGWTPVHAAVDTGNVDSLKLLMYHRAPAHG). The segment at 856–886 (HGNSLNEEEPESDVSDLDDGEESSEGESKPV) is disordered. Positions 861–880 (NEEEPESDVSDLDDGEESSE) are enriched in acidic residues. Residues 898 to 928 (EGWTAAHIAASKGFKNCLEILCRHRGLEPER) form an ANK 6 repeat. Residues 1436–1467 (ENGAWRKVNTSPRRKSGRFSSPTWNKPDLSNE) are disordered. At Ser1509 the chain carries Phosphoserine. The segment at 1542–1647 (RTFDSSGNNP…HKNEQTHRKT (106 aa)) is disordered. 2 stretches are compositionally biased toward polar residues: residues 1544–1559 (FDSSGNNPAFSATVNN) and 1567–1584 (KEVSPLSSHQTTECSNNK). A compositionally biased stretch (low complexity) spans 1609-1623 (SQNTKRSSSSSNTRQ). Positions 1630 to 1647 (SKEENWNLHKNEQTHRKT) are enriched in basic and acidic residues.

In terms of assembly, interacts with CTTN/cortactin SH3 domain. Interacts with STRN, STRN4/zinedin and MOB4/phocein; this interactions mediate the association with the STRIPAK core complex and may regulate dendritic spine distribution of the STRIPAK complex in hippocampal neurons. Activation of glutamate receptors weakens the interaction with STRN and STRN4.

It is found in the cytoplasm. The protein localises to the cell cortex. Its subcellular location is the cell projection. It localises to the dendritic spine. Regulates the dendritic spine distribution of CTTN/cortactin in hippocampal neurons, and thus controls dendritic spinogenesis and dendritic spine maintenance. Associates with the striatin-interacting phosphatase and kinase (STRIPAK) core complex to regulate dendritic spine distribution of the STRIPAK complex in hippocampal neurons. This chain is Cortactin-binding protein 2 (CTTNBP2), found in Microcebus murinus (Gray mouse lemur).